The sequence spans 268 residues: Protein limb expression 1 homolog (268 aa).

Belongs to the LIX1 family. In terms of assembly, interacts with ft (via intracellular domain) and ds (via intracellular domain).

The protein resides in the apical cell membrane. The protein localises to the cytoplasm. In terms of biological role, component of the Fat (ft) signaling pathway that functions in normal development of various organs such as the wing and leg. In developing imaginal disks, involved in regulating both the protein levels and apical localization of ft and ds. Involved in establishing planar cell polarity (PCP) along the anterior-posterior axis of the wing (the early Fz signaling event), probably by acting upstream of ds and ft to regulate Fz activity. In Drosophila melanogaster (Fruit fly), this protein is Protein limb expression 1 homolog.